The primary structure comprises 636 residues: Sodium-dependent multivitamin transporter (636 aa).

Helical transmembrane passes span 24 to 44 (FSLV…AIGL), 68 to 88 (CLPV…ILGV), 101 to 121 (FLGC…IPVF), 143 to 163 (ICGT…VLYA), 176 to 196 (LWLS…LGGL), 199 to 219 (VIWT…AVII), 256 to 276 (FWTL…VNQA), 297 to 317 (VFPC…VMFA), 336 to 356 (FVLY…GLFV), 404 to 424 (FGYG…GPVL), 428 to 448 (ISIF…GMFF), and 456 to 476 (AIVG…GSIV). Asparagine 489 and asparagine 498 each carry an N-linked (GlcNAc...) asparagine glycan. A helical transmembrane segment spans residues 528 to 548 (LWYSAHNSTTVIVVGLIVSLL). A disordered region spans residues 606–627 (LRASGDKEPMTEASPVHQGTSP).

The protein belongs to the sodium:solute symporter (SSF) (TC 2.A.21) family. Interacts with PDZD11.

It localises to the cell membrane. It is found in the apical cell membrane. It carries out the reaction biotin(out) + 2 Na(+)(out) = biotin(in) + 2 Na(+)(in). It catalyses the reaction (R)-pantothenate(out) + 2 Na(+)(out) = (R)-pantothenate(in) + 2 Na(+)(in). The enzyme catalyses (R)-lipoate(out) + 2 Na(+)(out) = (R)-lipoate(in) + 2 Na(+)(in). The catalysed reaction is iodide(out) + 2 Na(+)(out) = iodide(in) + 2 Na(+)(in). Functionally, sodium-dependent multivitamin transporter that mediates the electrogenic transport of pantothenate, biotin, lipoate and iodide. Functions as a Na(+)-coupled substrate symporter where the stoichiometry of Na(+):substrate is 2:1, creating an electrochemical Na(+) gradient used as driving force for substrate uptake. Required for biotin and pantothenate uptake in the intestine across the brush border membrane. Plays a role in the maintenance of intestinal mucosa integrity, by providing the gut mucosa with biotin. Contributes to the luminal uptake of biotin and pantothenate into the brain across the blood-brain barrier. The sequence is that of Sodium-dependent multivitamin transporter (SLC5A6) from Oryctolagus cuniculus (Rabbit).